Consider the following 166-residue polypeptide: Interleukin-2 (166 aa).

The N-terminal stretch at 1–20 is a signal peptide; that stretch reads MYSMQLASCVTLTLVLLVNS. O-linked (GalNAc...) threonine glycosylation occurs at threonine 23. Cysteines 89 and 137 form a disulfide.

It belongs to the IL-2 family.

It localises to the secreted. Functionally, cytokine produced by activated CD4-positive helper T-cells and to a lesser extend activated CD8-positive T-cells and natural killer (NK) cells that plays pivotal roles in the immune response and tolerance. Binds to a receptor complex composed of either the high-affinity trimeric IL-2R (IL2RA/CD25, IL2RB/CD122 and IL2RG/CD132) or the low-affinity dimeric IL-2R (IL2RB and IL2RG). Interaction with the receptor leads to oligomerization and conformation changes in the IL-2R subunits resulting in downstream signaling starting with phosphorylation of JAK1 and JAK3. In turn, JAK1 and JAK3 phosphorylate the receptor to form a docking site leading to the phosphorylation of several substrates including STAT5. This process leads to activation of several pathways including STAT, phosphoinositide-3-kinase/PI3K and mitogen-activated protein kinase/MAPK pathways. Functions as a T-cell growth factor and can increase NK-cell cytolytic activity as well. Promotes strong proliferation of activated B-cells and subsequently immunoglobulin production. Plays a pivotal role in regulating the adaptive immune system by controlling the survival and proliferation of regulatory T-cells, which are required for the maintenance of immune tolerance. Moreover, participates in the differentiation and homeostasis of effector T-cell subsets, including Th1, Th2, Th17 as well as memory CD8-positive T-cells. This Mus spretus (Western Mediterranean mouse) protein is Interleukin-2 (Il2).